Consider the following 777-residue polypeptide: MALASGNRLGSARGQTCADASGRVAPRLLSRACSGSPLALGVLACLGAASSVKPHPRLPATTSAASAPLPARGPAPCAAVPTVVTPDNATGVFEELAAGQQRKYIMISGKGGVGKTSLSASLAVKLAAAGHTTLVVSTDPAHSLSDSLAQDVSGGRPVLLQGTDLPLWGLEIDPEEAKREFFEGSGAGQDGEAGGPSAASQVSDFMNRMGMGFVIDQLKELKLGELLNTPPPGLDEAVAIAKVVQFVQAAEYARFSRIVFDTAPTGHTLRLLALPDFVDASLAKVIRLRKKLNGATSVVRGLFGAGESQDEAVEKLELLQQRVRMVKALFRDKTQTEFIIATIPTYLGVNESSRLLQALRAEQIPCKRIIVNQIVGPQQGDAYLRMKMKDQIAALEMVANDPGLRPLRKVIAPMVDVEVRGVPALSYFGNVVWKDVYDQMNQGADRKFFLLGGKGGVGKTSCSSSLAVHFANDGLPTLVVSTDPAHSLSDAFDQDLSGGSPVKITSPLGDELPLWGLQLDPEQAKAELRAVLADDGGKKLNETLDGLGLGVISDQLKDLQLGELLDTPPPGVDEAIAIAKVVQFLKAPEYSHFKRIVFDTAPTGHTLRLLSLPDFLDASIGKLVRLRQKLSAATSAVKNLFSGGQPGEEDVAVKRLEALQASMEDAKAMFRNQQTTEFIIVTIPTVMATAESCRLASALQHEGIPLKTIIVNQVVQANATDKFLTARRADQARALHHLEEDTGPDGLASLQLIKAPLCDLEVRGVPALSYFGNVVWK.

110-117 lines the ATP pocket; it reads KGGVGKTS. The active site involves Asp139. Residues Asn372 and 454–461 each bind ATP; that span reads KGGVGKTS. The active site involves Asp483. Asn712 contributes to the ATP binding site.

Belongs to the arsA ATPase family. Monomer. Interacts with TOC34.

It is found in the cytoplasm. The protein localises to the cytosol. In terms of biological role, ATPase required for the post-translational delivery of tail-anchored (TA) proteins to the chloroplast. Required for the accumulation of TOC34, an essential component of the outer chloroplast membrane translocon (TOC) complex. Recognizes and selectively binds the transmembrane domain of TA proteins in the cytosol. This complex then targets to chloroplast, where the tail-anchored protein is released for insertion. This process is regulated by ATP binding and hydrolysis. The polypeptide is ATPase ARSA1 (Chlamydomonas reinhardtii (Chlamydomonas smithii)).